A 459-amino-acid chain; its full sequence is MHAAPIPQDAAPIIAADRAHVWHHLSQHKPYETSDPRVFVEGRGMRLWDATGREFLDATSGGVWTVNLGYGRKDVVEAVAAQLLALPYYAGAAGTVPGARYAEALIAKMPGLSRVYYSNSGSEANEKVYKMVRQISHRHHGGRKGKILFRERDYHGTTIAALATSGQAQRAEHYGPFPDGFVSVPHCLEYRAQWDCANYGERAADAIEEVILREGPDSIGCLVLEPITAGGGVIVPPAGYWEKVSHICRKYNILLHLDEVVCGLGRTGAWFGYQHYGIQPDFVTMAKGVAAGYAAISCTVTTEAVFELFKDAPSDPLCHFRDISTFGGCTAGPAAALETLRIIEEEGLLQNTAQMGERLLANLRDLAERHAVIGDVRGKGLFCGAELVADRRTKEPLAEAKVQAVVADCAAQGVLIGATNRSIPGLNTTLCLAPALIASEAEIDRITETIDAALRRLAA.

An N6-(pyridoxal phosphate)lysine modification is found at Lys287.

The protein belongs to the class-III pyridoxal-phosphate-dependent aminotransferase family. Pyridoxal 5'-phosphate serves as cofactor.

Its subcellular location is the cytoplasm. The catalysed reaction is taurine + pyruvate = sulfoacetaldehyde + L-alanine. The protein operates within organosulfur degradation; taurine degradation via aerobic pathway; acetyl phosphate and sulfite from taurine: step 1/2. Catalyzes the degradation of taurine into alanine and sulfoacetaldehyde. The protein is Taurine--pyruvate aminotransferase of Rhodobacter capsulatus (strain ATCC BAA-309 / NBRC 16581 / SB1003).